A 437-amino-acid polypeptide reads, in one-letter code: Cysteine--tRNA ligase (437 aa).

Residue C31 participates in Zn(2+) binding. A 'HIGH' region motif is present at residues 33-43; it reads PTVYNDLHLGN. Zn(2+) is bound by residues C205, H230, and E234. A 'KMSKS' region motif is present at residues 262-266; that stretch reads KMSKS. K265 is an ATP binding site.

This sequence belongs to the class-I aminoacyl-tRNA synthetase family. In terms of assembly, monomer. The cofactor is Zn(2+).

The protein resides in the cytoplasm. The enzyme catalyses tRNA(Cys) + L-cysteine + ATP = L-cysteinyl-tRNA(Cys) + AMP + diphosphate. This chain is Cysteine--tRNA ligase (cysS), found in Mycoplasma pneumoniae (strain ATCC 29342 / M129 / Subtype 1) (Mycoplasmoides pneumoniae).